The sequence spans 290 residues: Light-independent protochlorophyllide reductase iron-sulfur ATP-binding protein (290 aa).

Residues 10–15 (GIGKST) and K39 contribute to the ATP site. Residue S14 participates in Mg(2+) binding. Residues C95 and C129 each contribute to the [4Fe-4S] cluster site. 180 to 181 (NR) serves as a coordination point for ATP.

This sequence belongs to the NifH/BchL/ChlL family. As to quaternary structure, homodimer. Protochlorophyllide reductase is composed of three subunits; ChlL, ChlN and ChlB. [4Fe-4S] cluster serves as cofactor.

The protein localises to the plastid. It localises to the chloroplast. It carries out the reaction chlorophyllide a + oxidized 2[4Fe-4S]-[ferredoxin] + 2 ADP + 2 phosphate = protochlorophyllide a + reduced 2[4Fe-4S]-[ferredoxin] + 2 ATP + 2 H2O. It participates in porphyrin-containing compound metabolism; chlorophyll biosynthesis (light-independent). Its function is as follows. Component of the dark-operative protochlorophyllide reductase (DPOR) that uses Mg-ATP and reduced ferredoxin to reduce ring D of protochlorophyllide (Pchlide) to form chlorophyllide a (Chlide). This reaction is light-independent. The L component serves as a unique electron donor to the NB-component of the complex, and binds Mg-ATP. The sequence is that of Light-independent protochlorophyllide reductase iron-sulfur ATP-binding protein from Chaetosphaeridium globosum (Charophycean green alga).